The chain runs to 590 residues: Pescadillo homolog (590 aa).

The disordered stretch occupies residues 297-318 (AKADAGEEEEVEEEEEVEDDGL). The span at 302-318 (GEEEEVEEEEEVEDDGL) shows a compositional bias: acidic residues. The BRCT domain occupies 337–446 (TAGQLFSNFT…KLLPVSEYAP (110 aa)). Positions 452–590 (AHLSPWGDAG…RKLNEKKEKR (139 aa)) are disordered. A compositionally biased stretch (acidic residues) spans 471–499 (DASDDDEDDEDIEVAPEDYDKDDEEEEAE). Positions 489 to 589 (YDKDDEEEEA…RRKLNEKKEK (101 aa)) form a coiled coil. 3 stretches are compositionally biased toward basic and acidic residues: residues 500–517 (AEAK…KGTK), 532–547 (DKMT…DKKL), and 567–577 (NDKKSDREAEL).

The protein belongs to the pescadillo family. Component of the NOP7 complex, composed of ERB1, NOP7 and YTM1. The complex is held together by ERB1, which interacts with NOP7 via its N-terminal domain and with YTM1 via a high-affinity interaction between the seven-bladed beta-propeller domains of the 2 proteins. The NOP7 complex associates with the 66S pre-ribosome.

The protein resides in the nucleus. It is found in the nucleolus. The protein localises to the nucleoplasm. Functionally, component of the NOP7 complex, which is required for maturation of the 25S and 5.8S ribosomal RNAs and formation of the 60S ribosome. This chain is Pescadillo homolog, found in Yarrowia lipolytica (strain CLIB 122 / E 150) (Yeast).